Here is a 1462-residue protein sequence, read N- to C-terminus: FYVE, RhoGEF and PH domain-containing protein 5 (1462 aa).

Disordered stretches follow at residues 37–323 (GRLP…SAEE), 492–512 (YVPE…APGI), 592–613 (SGSF…SSMV), 670–718 (HVDV…ASES), 746–777 (EDRS…YENI), and 851–887 (CPIS…THKV). Residues 72 to 82 (PLREDEPKDEG) are compositionally biased toward basic and acidic residues. 2 stretches are compositionally biased toward acidic residues: residues 95-106 (SAEEEEEREEGG) and 137-151 (EGTD…EGCA). Over residues 161 to 177 (SRSEEEEKLVQPHRECS) the composition is skewed to basic and acidic residues. 2 stretches are compositionally biased toward acidic residues: residues 211–220 (GEAEEDDEEG) and 242–255 (MGQD…EPPE). Residues 592–611 (SGSFSQRNHLPSSGTSTPSS) show a composition bias toward polar residues. The segment covering 676-685 (SSSRSSSESS) has biased composition (low complexity). The segment covering 858–887 (PKEDLTSDEEQRSSEEEDSASRDPSVTHKV) has biased composition (basic and acidic residues). One can recognise a DH domain in the interval 892 to 1084 (RALVIAQELL…SKVTDRANDS (193 aa)). Residues 1113–1207 (EFLKEGTLMK…WYGCLSRALP (95 aa)) enclose the PH 1 domain. An FYVE-type zinc finger spans residues 1242–1301 (VTHVMMCMNCGCDFSLTLRRHHCHACGKIVCRNCSRNKYPLKYLKDRMAKVCDGCFGELK). Residues cysteine 1248, cysteine 1251, cysteine 1264, cysteine 1267, cysteine 1272, cysteine 1275, cysteine 1293, and cysteine 1296 each contribute to the Zn(2+) site. The region spanning 1363–1461 (GSAISGYLSR…WIEAMEDASV (99 aa)) is the PH 2 domain.

In terms of tissue distribution, expressed in endothelial cells (at protein level).

The protein localises to the cytoplasm. It is found in the cytoskeleton. The protein resides in the cell projection. Its subcellular location is the ruffle membrane. It localises to the endoplasmic reticulum. The protein localises to the golgi apparatus. It is found in the early endosome. Activates CDC42, a member of the Ras-like family of Rho- and Rac proteins, by exchanging bound GDP for free GTP. Mediates VEGF-induced CDC42 activation. May regulate proangiogenic action of VEGF in vascular endothelial cells, including network formation, directional movement and proliferation. May play a role in regulating the actin cytoskeleton and cell shape. The chain is FYVE, RhoGEF and PH domain-containing protein 5 (FGD5) from Homo sapiens (Human).